Consider the following 109-residue polypeptide: Cytochrome c-550 (109 aa).

Residues Cys13, Cys16, His17, and Met79 each coordinate heme c.

In terms of processing, binds 1 heme c group covalently per subunit.

In Nitrobacter winogradskyi (Nitrobacter agilis), this protein is Cytochrome c-550.